The chain runs to 569 residues: 2-succinyl-5-enolpyruvyl-6-hydroxy-3-cyclohexene-1-carboxylate synthase (569 aa).

It belongs to the TPP enzyme family. MenD subfamily. In terms of assembly, homodimer. Mg(2+) serves as cofactor. Requires Mn(2+) as cofactor. The cofactor is thiamine diphosphate.

The catalysed reaction is isochorismate + 2-oxoglutarate + H(+) = 5-enolpyruvoyl-6-hydroxy-2-succinyl-cyclohex-3-ene-1-carboxylate + CO2. It participates in quinol/quinone metabolism; 1,4-dihydroxy-2-naphthoate biosynthesis; 1,4-dihydroxy-2-naphthoate from chorismate: step 2/7. It functions in the pathway quinol/quinone metabolism; menaquinone biosynthesis. In terms of biological role, catalyzes the thiamine diphosphate-dependent decarboxylation of 2-oxoglutarate and the subsequent addition of the resulting succinic semialdehyde-thiamine pyrophosphate anion to isochorismate to yield 2-succinyl-5-enolpyruvyl-6-hydroxy-3-cyclohexene-1-carboxylate (SEPHCHC). This Shewanella sediminis (strain HAW-EB3) protein is 2-succinyl-5-enolpyruvyl-6-hydroxy-3-cyclohexene-1-carboxylate synthase.